Reading from the N-terminus, the 44-residue chain is Thymosin beta-4 (44 aa).

The segment covering Met-1 to Glu-25 has biased composition (basic and acidic residues). A disordered region spans residues Met-1–Ser-44. Ala-2 carries the post-translational modification N-acetylalanine. Residue Lys-4 is modified to N6-acetyllysine. Lys-12 bears the N6-acetyllysine; alternate mark. A Glycyl lysine isopeptide (Lys-Gly) (interchain with G-Cter in SUMO2); alternate cross-link involves residue Lys-12. Thr-23 is modified (phosphothreonine). Lys-26 carries the post-translational modification N6-acetyllysine. At Ser-31 the chain carries Phosphoserine. Lys-32 carries the N6-acetyllysine modification. The span at Glu-33–Ser-44 shows a compositional bias: basic and acidic residues. Position 34 is a phosphothreonine (Thr-34). The residue at position 39 (Lys-39) is an N6-acetyllysine.

It belongs to the thymosin beta family. Originally found in thymus but it is widely distributed in many tissues.

Its subcellular location is the cytoplasm. The protein localises to the cytoskeleton. Its function is as follows. Plays an important role in the organization of the cytoskeleton. Binds to and sequesters actin monomers (G actin) and therefore inhibits actin polymerization. In terms of biological role, seraspenide inhibits the entry of hematopoietic pluripotent stem cells into the S-phase. This is Thymosin beta-4 (TMSB4) from Oryctolagus cuniculus (Rabbit).